Here is a 550-residue protein sequence, read N- to C-terminus: Beta-cubebene synthase (550 aa).

Residues Asp-303, Asp-307, Asp-447, and Glu-455 each contribute to the Mg(2+) site. Positions 303-307 (DDTYD) match the DDXXD motif motif.

The protein belongs to the terpene synthase family. Tpsa subfamily. It depends on Mg(2+) as a cofactor. Expressed in young developing leaves and in stamens. Not detected in tepals and carpels.

It catalyses the reaction (2E,6E)-farnesyl diphosphate = beta-cubebene + diphosphate. Its pathway is secondary metabolite biosynthesis; terpenoid biosynthesis. In terms of biological role, sesquiterpene synthase converting farnesyl diphosphate into beta-cubebene (24.5%), alpha-muurolene (19.3%), delta-cadinol (18.6%), delta-elemene (16.0%), tau-muurolene (10.8%), and beta-elemene (10.8%). No activity with geranyl diphosphate or geranylgeranyl diphosphate. This Magnolia grandiflora (Southern magnolia) protein is Beta-cubebene synthase.